Consider the following 88-residue polypeptide: Putative membrane protein insertion efficiency factor (88 aa).

Belongs to the UPF0161 family.

Its subcellular location is the cell inner membrane. Could be involved in insertion of integral membrane proteins into the membrane. The polypeptide is Putative membrane protein insertion efficiency factor (Synechococcus sp. (strain CC9311)).